Reading from the N-terminus, the 221-residue chain is Protein-L-isoaspartate O-methyltransferase (221 aa).

Ser-64 is an active-site residue.

The protein belongs to the methyltransferase superfamily. L-isoaspartyl/D-aspartyl protein methyltransferase family.

The protein resides in the cytoplasm. The enzyme catalyses [protein]-L-isoaspartate + S-adenosyl-L-methionine = [protein]-L-isoaspartate alpha-methyl ester + S-adenosyl-L-homocysteine. Functionally, catalyzes the methyl esterification of L-isoaspartyl residues in peptides and proteins that result from spontaneous decomposition of normal L-aspartyl and L-asparaginyl residues. It plays a role in the repair and/or degradation of damaged proteins. The protein is Protein-L-isoaspartate O-methyltransferase of Cytophaga hutchinsonii (strain ATCC 33406 / DSM 1761 / CIP 103989 / NBRC 15051 / NCIMB 9469 / D465).